Consider the following 374-residue polypeptide: Flagellar P-ring protein (374 aa).

Residues 1 to 29 (MPGVGISRIVRIAVAALVALAPLMTPAHA) form the signal peptide.

The protein belongs to the FlgI family. In terms of assembly, the basal body constitutes a major portion of the flagellar organelle and consists of four rings (L,P,S, and M) mounted on a central rod.

It is found in the periplasm. The protein resides in the bacterial flagellum basal body. Assembles around the rod to form the L-ring and probably protects the motor/basal body from shearing forces during rotation. This chain is Flagellar P-ring protein, found in Nitrobacter hamburgensis (strain DSM 10229 / NCIMB 13809 / X14).